The primary structure comprises 292 residues: Elongation factor Ts (292 aa).

The segment at 80–83 is involved in Mg(2+) ion dislocation from EF-Tu; it reads TDFV.

It belongs to the EF-Ts family.

It localises to the cytoplasm. Its function is as follows. Associates with the EF-Tu.GDP complex and induces the exchange of GDP to GTP. It remains bound to the aminoacyl-tRNA.EF-Tu.GTP complex up to the GTP hydrolysis stage on the ribosome. In Ralstonia pickettii (strain 12J), this protein is Elongation factor Ts.